Here is a 215-residue protein sequence, read N- to C-terminus: MGLEKPQSKLEGGMHPQLIPSVIAVVFILLLSVCFIASCLVTHHNFSRCKRGTGVHKLEHHAKLKCIKEKSELKSAEGSTWNCCPIDWRAFQSNCYFPLTDNKTWAESERNCSGMGAHLMTISTEAEQNFIIQFLDRRLSYFLGLRDENAKGQWRWVDQTPFNPRRVFWHKNEPDNSQGENCVVLVYNQDKWAWNDVPCNFEASRICKIPGTTLN.

Residues 1 to 17 are Cytoplasmic-facing; the sequence is MGLEKPQSKLEGGMHPQ. The helical; Signal-anchor for type II membrane protein transmembrane segment at 18–38 threads the bilayer; the sequence is LIPSVIAVVFILLLSVCFIAS. Residues 39–215 lie on the Extracellular side of the membrane; sequence CLVTHHNFSR…ICKIPGTTLN (177 aa). The N-linked (GlcNAc...) asparagine glycan is linked to Asn-45. Cysteines 84 and 95 form a disulfide. One can recognise a C-type lectin domain in the interval 91 to 208; the sequence is FQSNCYFPLT…CNFEASRICK (118 aa). 2 N-linked (GlcNAc...) asparagine glycosylation sites follow: Asn-102 and Asn-111. Intrachain disulfides connect Cys-112–Cys-207 and Cys-182–Cys-199. 4 residues coordinate Ca(2+): Glu-173, Asp-175, Asn-195, and Asp-196.

In terms of assembly, heterodimer with CLEC4E; disulfide-linked. CLEC4E acts as a bridge for interaction between CLEC4D and FCER1G to form a functional complex. Heterodimer with CLEC6A; this heterodimer forms a pattern recognition receptor (PRR) against fungal infection. Expressed weakly in peripheral blood leukocytes, bone marrow and spleen. Expression is confined mostly in monocytes and macrophage and seems to be up-regulated by IL-6, IL-10, TNF-alpha and IFN-gamma.

Its subcellular location is the cell membrane. Calcium-dependent lectin that acts as a pattern recognition receptor (PRR) of the innate immune system: recognizes damage-associated molecular patterns (DAMPs) of pathogen-associated molecular patterns (PAMPs) of bacteria and fungi. The PAMPs include alpha-mannans on C.albicans hypheas and mycobacterial trehalose 6,6'-dimycolate (TDM). Interacts with signaling adapter Fc receptor gamma chain/FCER1G, likely via CLEC4E, to form a functional complex in myeloid cells. Binding of mycobacterial TDM or C.albicans alpha-mannans to this receptor complex leads to phosphorylation of the immunoreceptor tyrosine-based activation motif (ITAM) of FCER1G, triggering activation of SYK, CARD9 and NF-kappa-B, consequently driving maturation of antigen-presenting cells and shaping antigen-specific priming of T-cells toward effector T-helper 1 and T-helper 17 cell subtypes. The heterodimer formed with CLEC6A is active against fungal infection. Functions as an endocytic receptor. May be involved in antigen uptake at the site of infection, either for clearance of the antigen, or for processing and further presentation to T-cells. The chain is C-type lectin domain family 4 member D from Homo sapiens (Human).